Here is a 180-residue protein sequence, read N- to C-terminus: 6,7-dimethyl-8-ribityllumazine synthase (180 aa).

5-amino-6-(D-ribitylamino)uracil is bound by residues F23, S61–E63, and A85–I87. Q90–T91 contacts (2S)-2-hydroxy-3-oxobutyl phosphate. H93 (proton donor) is an active-site residue. F118 is a 5-amino-6-(D-ribitylamino)uracil binding site. R132 serves as a coordination point for (2S)-2-hydroxy-3-oxobutyl phosphate.

Belongs to the DMRL synthase family.

It carries out the reaction (2S)-2-hydroxy-3-oxobutyl phosphate + 5-amino-6-(D-ribitylamino)uracil = 6,7-dimethyl-8-(1-D-ribityl)lumazine + phosphate + 2 H2O + H(+). It functions in the pathway cofactor biosynthesis; riboflavin biosynthesis; riboflavin from 2-hydroxy-3-oxobutyl phosphate and 5-amino-6-(D-ribitylamino)uracil: step 1/2. Functionally, catalyzes the formation of 6,7-dimethyl-8-ribityllumazine by condensation of 5-amino-6-(D-ribitylamino)uracil with 3,4-dihydroxy-2-butanone 4-phosphate. This is the penultimate step in the biosynthesis of riboflavin. This is 6,7-dimethyl-8-ribityllumazine synthase from Gloeobacter violaceus (strain ATCC 29082 / PCC 7421).